We begin with the raw amino-acid sequence, 796 residues long: Inactive dipeptidyl peptidase 10 (796 aa).

Over 1 to 34 (MNQTASVSHHIKCQPSKTIKELGSNSPPQRNWKG) the chain is Cytoplasmic. Positions 1-55 (MNQTASVSHHIKCQPSKTIKELGSNSPPQRNWKGIAIALLVILVVCSLITMSVIL) are mediates effects on KCND2. A helical; Signal-anchor for type II membrane protein membrane pass occupies residues 35-55 (IAIALLVILVVCSLITMSVIL). Over 56–796 (LTPDELTNSS…VLPQEPEEDE (741 aa)) the chain is Extracellular. Asn63, Asn90, Asn111, and Asn119 each carry an N-linked (GlcNAc...) asparagine glycan. 2 positions are modified to phosphotyrosine: Tyr138 and Tyr143. N-linked (GlcNAc...) asparagine glycans are attached at residues Asn257, Asn342, and Asn748.

Belongs to the peptidase S9B family. DPPIV subfamily. As to quaternary structure, may form oligomers. Interacts with KCND1. Interacts with KCND2. Identified in a complex with KCND2 and KCNIP3. In terms of processing, N-glycosylation is important for cell surface expression, specially at Asn-257, which is crucial. As to expression, detected in brain cortex, hippocampus, thalamus and cerebellum Purkinje cells (at protein level).

It localises to the cell membrane. Functionally, promotes cell surface expression of the potassium channel KCND2. Modulates the activity and gating characteristics of the potassium channel KCND2. Has no dipeptidyl aminopeptidase activity. The chain is Inactive dipeptidyl peptidase 10 (Dpp10) from Rattus norvegicus (Rat).